The following is a 179-amino-acid chain: MIP18 family protein C144.16 (179 aa).

A disordered region spans residues Met-1–Glu-26.

The protein belongs to the MIP18 family.

Functionally, may play a role in chromosome segregation through establishment of sister chromatid cohesion. The chain is MIP18 family protein C144.16 from Schizosaccharomyces pombe (strain 972 / ATCC 24843) (Fission yeast).